The sequence spans 456 residues: ATP synthase subunit beta 1 (456 aa).

152-159 (GGAGVGKS) contributes to the ATP binding site.

This sequence belongs to the ATPase alpha/beta chains family. As to quaternary structure, F-type ATPases have 2 components, CF(1) - the catalytic core - and CF(0) - the membrane proton channel. CF(1) has five subunits: alpha(3), beta(3), gamma(1), delta(1), epsilon(1). CF(0) has three main subunits: a(1), b(2) and c(9-12). The alpha and beta chains form an alternating ring which encloses part of the gamma chain. CF(1) is attached to CF(0) by a central stalk formed by the gamma and epsilon chains, while a peripheral stalk is formed by the delta and b chains.

The protein resides in the cell membrane. The catalysed reaction is ATP + H2O + 4 H(+)(in) = ADP + phosphate + 5 H(+)(out). In terms of biological role, produces ATP from ADP in the presence of a proton gradient across the membrane. The catalytic sites are hosted primarily by the beta subunits. The polypeptide is ATP synthase subunit beta 1 (Listeria welshimeri serovar 6b (strain ATCC 35897 / DSM 20650 / CCUG 15529 / CIP 8149 / NCTC 11857 / SLCC 5334 / V8)).